Reading from the N-terminus, the 83-residue chain is Translational regulator CsrA (83 aa).

Belongs to the CsrA/RsmA family. As to quaternary structure, homodimer; the beta-strands of each monomer intercalate to form a hydrophobic core, while the alpha-helices form wings that extend away from the core.

It localises to the cytoplasm. A translational regulator that binds mRNA to regulate translation initiation and/or mRNA stability. Usually binds in the 5'-UTR at or near the Shine-Dalgarno sequence preventing ribosome-binding, thus repressing translation. Its main target seems to be the major flagellin gene, while its function is anatagonized by FliW. In Thermotoga maritima (strain ATCC 43589 / DSM 3109 / JCM 10099 / NBRC 100826 / MSB8), this protein is Translational regulator CsrA.